A 331-amino-acid polypeptide reads, in one-letter code: MTTPDAFRDAEYIADVSGISYGNVANLTEQDANVVPRENERMRKLQLAAKVAFIDRLLRDLDILIYCELSALYYMDCSVILFAIRAIVQLIFFTPKAPPFDPTRNQPFIGAIFVSNIFCMIFHNFFTHPEASEATRGYLHGGLLIDFIGQKAPIPLFRLFLLDFLVLILDLVMLGLIVERVKTTGQTSTTSTEILRVQDHDSEERGVHRTRPESRSSVVGAELDETDGHITRANAGVGEQAEHTQLLADPSEDGHTPGAKNSHPLDAFSSGEAVIMNLGLFDVIRDQWKYSTTAPPARTSSYIPSDQTAAFLRARFGLQVGPDGRVQRIQS.

An N-linked (GlcNAc...) asparagine glycan is attached at N26. 3 helical membrane-spanning segments follow: residues 63 to 83 (ILIY…ILFA), 107 to 127 (PFIG…NFFT), and 159 to 179 (LFLL…LIVE). Positions 197 to 214 (VQDHDSEERGVHRTRPES) are enriched in basic and acidic residues. Residues 197-225 (VQDHDSEERGVHRTRPESRSSVVGAELDE) form a disordered region.

Component of the DSC E3 ubiquitin ligase complex composed of dscA, dscB, dscC and dscD.

It is found in the endoplasmic reticulum membrane. Its pathway is protein modification; protein ubiquitination. In terms of biological role, component of the DSC E3 ubiquitin ligase complex which is required for the srbA transcriptional activator proteolytic cleavage to release the soluble transcription factor from the membrane in low oxygen or sterol conditions. Required for growth during hypoxia and triazole drug susceptibility, as well as for virulence in a murine model of invasive pulmonary aspergillosis (IPA). This chain is DSC E3 ubiquitin ligase complex subunit D, found in Aspergillus fumigatus (strain CBS 144.89 / FGSC A1163 / CEA10) (Neosartorya fumigata).